The following is a 33-amino-acid chain: Photosystem II reaction center protein Psb30 (33 aa).

The helical transmembrane segment at 5-25 (VVAQLTVLALIVVSGPLVIGL) threads the bilayer.

The protein belongs to the Psb30/Ycf12 family. As to quaternary structure, PSII is composed of 1 copy each of membrane proteins PsbA, PsbB, PsbC, PsbD, PsbE, PsbF, PsbH, PsbI, PsbJ, PsbK, PsbL, PsbM, PsbT, PsbX, PsbY, PsbZ, Psb30/Ycf12, peripheral proteins of the oxygen-evolving complex and a large number of cofactors. It forms dimeric complexes.

It is found in the plastid. It localises to the chloroplast thylakoid membrane. Its function is as follows. A core subunit of photosystem II (PSII), probably helps stabilize the reaction center. In Zygnema circumcarinatum (Green alga), this protein is Photosystem II reaction center protein Psb30.